Here is a 773-residue protein sequence, read N- to C-terminus: FT-interacting protein 3 (773 aa).

Residues 1–16 (MQRPPPEDFSLKETRP) are compositionally biased toward basic and acidic residues. Positions 1 to 24 (MQRPPPEDFSLKETRPHLGGGKLS) are disordered. 3 consecutive C2 domains span residues 22 to 142 (KLSG…PQWY), 181 to 305 (VSGT…SRWY), and 345 to 471 (YSSD…THSY). 5 residues coordinate Ca(2+): Asp-55, Asp-61, Asp-108, Asp-110, and Asp-115. 3 helical membrane passes run 574 to 594 (IMGV…ICNW), 608 to 628 (IILV…LFLI), and 716 to 736 (LFVL…FQVV).

It belongs to the MCTP family. Interacts with and regulates subcellular localization and trafficking of STM. Ca(2+) is required as a cofactor. In terms of tissue distribution, accumulates in vascular tissues, leaf primordia and flowers. Highly expressed in roots meristems and in both vegetative and inflorescence shoot apical meristems (SAMs).

It localises to the endoplasmic reticulum membrane. The protein localises to the cytoplasm. It is found in the vesicle. The protein resides in the cell membrane. Its subcellular location is the endosome membrane. It localises to the golgi apparatus membrane. Functionally, required for proliferation and differentiation of shoot stem cells in the shoot apical meristem (SAM), thus determining the appropriate balance between the maintenance of shoot stem cells and their differentiation into other aboveground plant parts via the control of subcellular localization and intercellular trafficking of STM in the shoot apex. Prevents intracellular trafficking of STM to the plasma membrane in cells in the peripheral shoot meristem region thus facilitating STM recycling to the nucleus to maintain stem cells. May function as a signaling molecule by regulating the trafficking of other regulators. This is FT-interacting protein 3 from Arabidopsis thaliana (Mouse-ear cress).